The chain runs to 36 residues: Pollen allergen Dac g 2 (36 aa).

Belongs to the expansin family. Expansin B subfamily.

The protein localises to the secreted. This is Pollen allergen Dac g 2 from Dactylis glomerata (Orchard grass).